The chain runs to 294 residues: MLTFQQIILKLQDYWDQQGCALLQPIDLEVGAGTSHTATFLRAIGPEPWKAAYVQPSRRPKDGRYGENPNRLQHYYQYQVVLKPAPENILELYLGSLATLGLDLKQNDIRFVEDDWENPTLGAWGLGWEVWLNGMEVTQFTYFQQVGGLDCKPVLGEITYGIERLAMYIQNCSNVYDLVWADGISYGDVYHQNEVEQSCYNFEHSNTDLLFANFTNFESEAKRLMEVPLALPAYEMVLKAAHTFNLLDARGAISVTERAAYIGRIRNLSRAVAQAYFESREKLGFPMCQRQVKA.

This sequence belongs to the class-II aminoacyl-tRNA synthetase family. Tetramer of two alpha and two beta subunits.

It is found in the cytoplasm. The enzyme catalyses tRNA(Gly) + glycine + ATP = glycyl-tRNA(Gly) + AMP + diphosphate. The chain is Glycine--tRNA ligase alpha subunit from Polynucleobacter asymbioticus (strain DSM 18221 / CIP 109841 / QLW-P1DMWA-1) (Polynucleobacter necessarius subsp. asymbioticus).